Here is a 403-residue protein sequence, read N- to C-terminus: Protein LAZ1 homolog 2 (403 aa).

Helical transmembrane passes span 16 to 36, 50 to 70, 162 to 182, 191 to 211, 236 to 256, and 269 to 289; these read SLIIGGSFATVAICLSLYSIL, WIVSVLFMVPVYATESIISLS, MILKTFCAFLTFLLELLGVYG, GYPYIVVVLNFSQMWALFCLV, IVFATWWQGFGIALLCYYGIL, and FLICIEMAIAAVAHLFVFPAE. Residues 381-403 are disordered; it reads SDGKEETEVTEEVTVETSVPPKE.

Belongs to the TMEM184 family.

It is found in the membrane. This is Protein LAZ1 homolog 2 from Arabidopsis thaliana (Mouse-ear cress).